The chain runs to 341 residues: UDP-3-O-acylglucosamine N-acyltransferase (341 aa).

The Proton acceptor role is filled by histidine 239.

Belongs to the transferase hexapeptide repeat family. LpxD subfamily. Homotrimer.

The enzyme catalyses a UDP-3-O-[(3R)-3-hydroxyacyl]-alpha-D-glucosamine + a (3R)-hydroxyacyl-[ACP] = a UDP-2-N,3-O-bis[(3R)-3-hydroxyacyl]-alpha-D-glucosamine + holo-[ACP] + H(+). It participates in bacterial outer membrane biogenesis; LPS lipid A biosynthesis. Its function is as follows. Catalyzes the N-acylation of UDP-3-O-acylglucosamine using 3-hydroxyacyl-ACP as the acyl donor. Is involved in the biosynthesis of lipid A, a phosphorylated glycolipid that anchors the lipopolysaccharide to the outer membrane of the cell. The sequence is that of UDP-3-O-acylglucosamine N-acyltransferase from Shewanella oneidensis (strain ATCC 700550 / JCM 31522 / CIP 106686 / LMG 19005 / NCIMB 14063 / MR-1).